Consider the following 241-residue polypeptide: Aquaporin Z 1 (241 aa).

Residues 23–43 (AVFAAAFPELGIGFLGVAFAF) traverse the membrane as a helical segment. Positions 63-65 (NPA) match the NPA 1 motif. Transmembrane regions (helical) follow at residues 85–105 (IVAQ…ILTG), 129–149 (LLSA…VILG), and 156–176 (PVGF…LISI). The NPA 2 signature appears at 184 to 186 (NPA). The helical transmembrane segment at 204–224 (WLFWLAPILGGAIGAVVWKIF) threads the bilayer.

It belongs to the MIP/aquaporin (TC 1.A.8) family. In terms of assembly, homotetramer.

The protein resides in the cell inner membrane. The enzyme catalyses H2O(in) = H2O(out). Functionally, channel that permits osmotically driven movement of water in both directions. It is involved in the osmoregulation and in the maintenance of cell turgor during volume expansion in rapidly growing cells. It mediates rapid entry or exit of water in response to abrupt changes in osmolarity. In Agrobacterium fabrum (strain C58 / ATCC 33970) (Agrobacterium tumefaciens (strain C58)), this protein is Aquaporin Z 1.